The sequence spans 591 residues: V-type ATP synthase alpha chain (591 aa).

An ATP-binding site is contributed by 242 to 249 (GPFGAGKT).

It belongs to the ATPase alpha/beta chains family.

The enzyme catalyses ATP + H2O + 4 H(+)(in) = ADP + phosphate + 5 H(+)(out). Functionally, produces ATP from ADP in the presence of a proton gradient across the membrane. The V-type alpha chain is a catalytic subunit. This Chlamydia trachomatis serovar L2 (strain ATCC VR-902B / DSM 19102 / 434/Bu) protein is V-type ATP synthase alpha chain.